Reading from the N-terminus, the 285-residue chain is Nucleotide-binding protein Psyr_4150 (285 aa).

Residue Gly8–Ser15 participates in ATP binding. Position 60–63 (Asp60–Asn63) interacts with GTP.

This sequence belongs to the RapZ-like family.

In terms of biological role, displays ATPase and GTPase activities. The polypeptide is Nucleotide-binding protein Psyr_4150 (Pseudomonas syringae pv. syringae (strain B728a)).